Consider the following 747-residue polypeptide: Flowering time control protein FCA (747 aa).

The disordered stretch occupies residues 80-101 (YSVRPTTPPVQQPLSGQKRGYP). 2 consecutive RRM domains span residues 120 to 201 (VKLF…YADG) and 211 to 291 (FKLF…FAEP). Residues 291-301 (PKRPKPGESRE) show a composition bias toward basic and acidic residues. Positions 291 to 503 (PKRPKPGESR…QQPLQKMQHP (213 aa)) are disordered. Composition is skewed to polar residues over residues 320-353 (RPTS…SNTG) and 395-406 (SSSATLQQQNRA). Positions 448-460 (SSQLPTSQLPPQQ) are enriched in low complexity. Residues 461-498 (NISRATAPQTPLNINLRPTTVSSATVQFPPRSQQQPLQ) show a composition bias toward polar residues. Residues 591 to 624 (GSVKCTWTEHTSPDGFKYYYNGLTGESKWEKPEE) form the WW domain. Basic and acidic residues predominate over residues 630–641 (REQQKQQQHQEK). Disordered stretches follow at residues 630-707 (REQQ…SGIG) and 722-747 (AASM…KNKA). Residues 642–673 (PTIQQSQTQLQPLQQQPQQVQQQYQGQQLQQP) show a composition bias toward low complexity. 2 stretches are compositionally biased toward polar residues: residues 674-707 (FYSS…SGIG) and 726-739 (NDIS…QSPQ).

As to quaternary structure, interacts (via C-terminus) with SWI3B and (via WW domain) with FY (via PPLPP motifs). As to expression, constitutively expressed, but the negative feedback maintains the active isoform a low level throughout much of the plant, except in meristematic cells at a specific time in development.

It is found in the nucleus. Plays a major role in the promotion of the transition of the vegetative meristem to reproductive development. Plays a role in the regulation of flowering time in the autonomous flowering pathway by decreasing FLOWERING LOCUS C mRNA levels. Required for RNA-mediated chromatin silencing of a range of loci in the genome. Cotranscriptionally recognizes aberrant RNA and marks it for silencing. Controls alternative cleavage and polyadenylation on pre-mRNAs and antisense RNAs. Acts redundantly with FPA to prevent the expression of distally polyadenylated antisense RNAs at the FLC locus. This Arabidopsis thaliana (Mouse-ear cress) protein is Flowering time control protein FCA (FCA).